The chain runs to 465 residues: UDP-N-acetylmuramoylalanine--D-glutamate ligase (465 aa).

An ATP-binding site is contributed by 116–122 (GTNGKTT).

It belongs to the MurCDEF family.

The protein resides in the cytoplasm. It carries out the reaction UDP-N-acetyl-alpha-D-muramoyl-L-alanine + D-glutamate + ATP = UDP-N-acetyl-alpha-D-muramoyl-L-alanyl-D-glutamate + ADP + phosphate + H(+). It functions in the pathway cell wall biogenesis; peptidoglycan biosynthesis. In terms of biological role, cell wall formation. Catalyzes the addition of glutamate to the nucleotide precursor UDP-N-acetylmuramoyl-L-alanine (UMA). The polypeptide is UDP-N-acetylmuramoylalanine--D-glutamate ligase (Thermobifida fusca (strain YX)).